The following is a 153-amino-acid chain: Mitotic-spindle organizing protein 2 (153 aa).

Residues 80–153 (KVSETSTGDA…SSSSSQLTSN (74 aa)) form a disordered region. Polar residues-rich tracts occupy residues 81-99 (VSET…TAVP) and 107-133 (KMSS…SATR). Residues 134-153 (GQKSTKSSGSSSSSSQLTSN) show a composition bias toward low complexity.

This sequence belongs to the MOZART2 family. In terms of assembly, part of the gamma-tubulin complex. Interacts with TUBG1.

It is found in the cytoplasm. Its subcellular location is the cytoskeleton. It localises to the microtubule organizing center. The protein resides in the centrosome. The protein localises to the spindle. The sequence is that of Mitotic-spindle organizing protein 2 (mzt2) from Danio rerio (Zebrafish).